A 996-amino-acid chain; its full sequence is Sodium/potassium-transporting ATPase subunit alpha-A (996 aa).

The next 2 membrane-spanning stretches (helical) occupy residues 73–93 (LFGGFQMLLWIGSILCFIAYT) and 107–123 (LYLGLALLFVVIMTGCF). The tract at residues 191–211 (DNSSLTGESEPQSRSTECTND) is disordered. The next 2 helical transmembrane spans lie at 268–290 (FIHIITAMAVSLAAVFAVISFLY) and 297–325 (AAIFMIGIIVAKVPEGLLATVTVCLTLTA). Asp-353 acts as the 4-aspartylphosphate intermediate in catalysis. Lys-483 is an ATP binding site. Mg(2+) contacts are provided by Asp-692 and Asp-696. The next 4 membrane-spanning stretches (helical) occupy residues 762-785 (LSPFLMYILFDLPLAIGTVTILCI), 820-847 (ERLISMAYGQIGVMQAFGGFFTYFVIMG), 889-909 (YTCHTAFFISIVIVQWTDLII), and 926-951 (TLNFALVFETCVAAFLSYTPGMDKGL).

This sequence belongs to the cation transport ATPase (P-type) (TC 3.A.3) family. Type IIC subfamily. As to quaternary structure, the sodium/potassium-transporting ATPase is composed of a catalytic alpha subunit, an auxiliary non-catalytic beta subunit and an additional regulatory subunit.

It is found in the cell membrane. The catalysed reaction is K(+)(out) + Na(+)(in) + ATP + H2O = K(+)(in) + Na(+)(out) + ADP + phosphate + H(+). Its function is as follows. This is the catalytic component of the active enzyme, which catalyzes the hydrolysis of ATP coupled with the exchange of sodium and potassium ions across the plasma membrane. This action creates the electrochemical gradient of sodium and potassium ions, providing the energy for active transport of various nutrients. In Artemia franciscana (Brine shrimp), this protein is Sodium/potassium-transporting ATPase subunit alpha-A.